The following is a 471-amino-acid chain: Ankyrin repeat and death domain-containing protein 1A (471 aa).

ANK repeat units lie at residues 19–48 (VGRV…AVDE), 52–81 (FGMN…KIHC), 85–114 (DGLT…DVAL), 120–149 (LGRT…DHSV), 153–182 (EGNT…DLEE), 186–215 (EGLT…TVNA), 219–248 (KNLS…CTNV), 251–280 (HGAS…DLNA), 284–313 (RQQT…DLNL), and 317–346 (QGKT…FYKW). In terms of domain architecture, Death spans 379-467 (SVLWRLASRH…DLAELAVASV (89 aa)).

The sequence is that of Ankyrin repeat and death domain-containing protein 1A (ANKDD1A) from Macaca fascicularis (Crab-eating macaque).